A 66-amino-acid chain; its full sequence is Large ribosomal subunit protein uL29 (66 aa).

The protein belongs to the universal ribosomal protein uL29 family.

The chain is Large ribosomal subunit protein uL29 from Ruegeria sp. (strain TM1040) (Silicibacter sp.).